The following is a 430-amino-acid chain: Asparagine--tRNA ligase (430 aa).

The protein belongs to the class-II aminoacyl-tRNA synthetase family. In terms of assembly, homodimer.

Its subcellular location is the cytoplasm. The enzyme catalyses tRNA(Asn) + L-asparagine + ATP = L-asparaginyl-tRNA(Asn) + AMP + diphosphate + H(+). The protein is Asparagine--tRNA ligase of Staphylococcus aureus (strain USA300).